We begin with the raw amino-acid sequence, 308 residues long: Tetraacyldisaccharide 4'-kinase (308 aa).

63–70 (SFGGNGKT) contributes to the ATP binding site.

It belongs to the LpxK family.

It carries out the reaction a lipid A disaccharide + ATP = a lipid IVA + ADP + H(+). It participates in glycolipid biosynthesis; lipid IV(A) biosynthesis; lipid IV(A) from (3R)-3-hydroxytetradecanoyl-[acyl-carrier-protein] and UDP-N-acetyl-alpha-D-glucosamine: step 6/6. Functionally, transfers the gamma-phosphate of ATP to the 4'-position of a tetraacyldisaccharide 1-phosphate intermediate (termed DS-1-P) to form tetraacyldisaccharide 1,4'-bis-phosphate (lipid IVA). The sequence is that of Tetraacyldisaccharide 4'-kinase from Campylobacter jejuni subsp. jejuni serotype O:23/36 (strain 81-176).